A 545-amino-acid chain; its full sequence is Membrane protein insertase YidC (545 aa).

Transmembrane regions (helical) follow at residues isoleucine 350–tyrosine 370, leucine 424–valine 444, alanine 461–leucine 481, and proline 498–valine 518.

The protein belongs to the OXA1/ALB3/YidC family. Type 1 subfamily. As to quaternary structure, interacts with the Sec translocase complex via SecD. Specifically interacts with transmembrane segments of nascent integral membrane proteins during membrane integration.

The protein localises to the cell inner membrane. In terms of biological role, required for the insertion and/or proper folding and/or complex formation of integral membrane proteins into the membrane. Involved in integration of membrane proteins that insert both dependently and independently of the Sec translocase complex, as well as at least some lipoproteins. Aids folding of multispanning membrane proteins. The protein is Membrane protein insertase YidC of Neisseria gonorrhoeae (strain NCCP11945).